Consider the following 510-residue polypeptide: Allene oxide synthase 2, chloroplastic (510 aa).

The transit peptide at 1–31 directs the protein to the chloroplast; it reads MALTLSFSLPLPSLHQKIPSKYSTFRPIIVS. Residues Lys-127, His-158, and Lys-162 each contribute to the heme b site. Asn-315 and Lys-321 together coordinate (13S)-hydroperoxy-(9Z,11E)-octadecadienoate. Asn-315 lines the (13S)-hydroperoxy-(9Z,11E,15Z)-octadecatrienoate pocket. Heme b is bound by residues Lys-463 and Cys-465.

This sequence belongs to the cytochrome P450 family. Heme b is required as a cofactor. Expressed in flower buds, leaves, roots, stems, petioles and cotyledons. Not detected in ripe fruits. Expressed in sieve elements.

Its subcellular location is the plastid. It localises to the chloroplast inner membrane. The catalysed reaction is (13S)-hydroperoxy-(9Z,11E,15Z)-octadecatrienoate = (9Z,13S,15Z)-12,13-epoxyoctadeca-9,11,15-trienoate + H2O. The enzyme catalyses (13S)-hydroperoxy-(9Z,11E)-octadecadienoate = (9Z,13S)-12,13-epoxyoctadeca-9,11-dienoate + H2O. Functionally, cytochrome P450 of the CYP74A subfamily involved in the biosynthesis of jasmonic acid from lipoxygenase-derived hydroperoxides of free fatty acids. Catalyzes the synthesis of unstable allene oxide, which is further converted spontaneously by hydrolysis or cyclization. Metabolizes 13- but not 9-hydroperoxides of linoleic and linolenic acids. Can use 15S-hydroperoxy-11(Z),13(E),17(Z)-eicosatrienoic acid (15-HPET) and 13S-hydroperoxy-9(Z),11(E),15(Z)-octadecatrienoic acid (13-HPOT) as substrates, but only 50% activity with 13S-hydroperoxy-9(Z),11(E)-octadecadienoic acid (13-HPOD). The chain is Allene oxide synthase 2, chloroplastic from Solanum lycopersicum (Tomato).